A 214-amino-acid chain; its full sequence is MSAVTRHHADELARGADELGVALDAEKKHQLLAYLALLIKWNKAYNLTAVRDPDEMVSRHLLDSLSIVPHAEAGDNWLDVGSGGGMPGVPLAILFPERRLTLLDSNGKKTRFLTQVKLELKLANLDVVHSRVEAFRPESPFDGIVSRAFSSLEDFANWTRHLGGQETRWLAMKGVHPNEELAALPEDFRVEAEHALAVPGCQGQRHLLILRRTA.

S-adenosyl-L-methionine-binding positions include Gly81, Met86, 132 to 133 (VE), and Arg147.

Belongs to the methyltransferase superfamily. RNA methyltransferase RsmG family.

It is found in the cytoplasm. The enzyme catalyses guanosine(527) in 16S rRNA + S-adenosyl-L-methionine = N(7)-methylguanosine(527) in 16S rRNA + S-adenosyl-L-homocysteine. Its function is as follows. Specifically methylates the N7 position of guanine in position 527 of 16S rRNA. This is Ribosomal RNA small subunit methyltransferase G from Pseudomonas paraeruginosa (strain DSM 24068 / PA7) (Pseudomonas aeruginosa (strain PA7)).